The primary structure comprises 224 residues: Protein FAM3D (224 aa).

Positions Met-1–Ser-25 are cleaved as a signal peptide. Cystine bridges form between Cys-55–Cys-83 and Cys-61–Cys-218. Positions Asn-64–Lys-222 constitute a GG-type lectin domain. Residue Asn-107 is glycosylated (N-linked (GlcNAc...) asparagine).

This sequence belongs to the FAM3 family. In terms of tissue distribution, abundantly expressed in placenta and weakly expressed in small intestine.

The protein localises to the secreted. The polypeptide is Protein FAM3D (FAM3D) (Homo sapiens (Human)).